Here is a 521-residue protein sequence, read N- to C-terminus: MRKIMLIASAMSALSLPFSANAIEFDENSLECGPYAKVGIVGGVLSGVESARLDPADSEGKKHLPLIKGMPFGVTLAAGMTITPGVRAEISAMYLMNVKAEVELGKMGSDANTGTTADASAGVIRKHKKLTPPQPNIMPISIADRDIAVDIPNAAGQGNVDVRAAARIAWLKNYAGIDYYVPDSNNPQGRVVNPVLLNIPQGNPNPAGGGGRAAPAAFDILDHAQWRDVVVGITALSNANKPNVSAVKILSDKISQIYADIKPFANVASVQISETPLPDSASVDQIQNKVQELNKVLEDVRESFDGFILNAFAQPVRLNFQIPQVVQGQGQQPQAAATAQEAAAAAAIRALNDGENNGIIQLYKDLYKLQRNVALKKSMKQLGDELGVDQGQEGGCSKDKKQSDTTAEESKKEGKKGKEIEFDLHMAVGQVKLYADLFTIDSFSVYAGIGAGLAYTHGKIDGKDIKAHTGMVGSLALGVAANVADGVYMDVDAGYLYSFSKIEEKYQMNAFVASAGIRYNF.

Residues 1-22 (MRKIMLIASAMSALSLPFSANA) form the signal peptide. A helical membrane pass occupies residues 64–86 (LPLIKGMPFGVTLAAGMTITPGV). The disordered stretch occupies residues 386–415 (LGVDQGQEGGCSKDKKQSDTTAEESKKEGK). Residues 396-415 (CSKDKKQSDTTAEESKKEGK) show a composition bias toward basic and acidic residues. A helical membrane pass occupies residues 469–484 (TGMVGSLALGVAANVA).

Its subcellular location is the cell membrane. Its function is as follows. May be an adherent factor for rickettsial adsorption to the host-cell surface and a determinant of virulence of individual rickettsial strain. It is the major outer membrane protein. The polypeptide is 56 kDa type-specific antigen (Orientia tsutsugamushi (Rickettsia tsutsugamushi)).